The primary structure comprises 737 residues: Propionyl-CoA carboxylase alpha chain, mitochondrial (737 aa).

A mitochondrion-targeting transit peptide spans 1–61 (MAGLWVRTVA…QCLVVSRSLS (61 aa)). A Biotin carboxylation domain is found at 71 to 518 (TFDKILIANR…STKFLSDVYP (448 aa)). Residue Lys-74 is modified to N6-acetyllysine; alternate. Residue Lys-74 is modified to N6-succinyllysine; alternate. Lys-128 carries the post-translational modification N6-succinyllysine. Lys-159 carries the post-translational modification N6-acetyllysine; alternate. At Lys-159 the chain carries N6-succinyllysine; alternate. N6-acetyllysine is present on Lys-163. Lys-186 serves as a coordination point for ATP. One can recognise an ATP-grasp domain in the interval 190 to 387 (KLLAKRAKVN…LVQEMILVAK (198 aa)). Lys-197 is modified (N6-succinyllysine). Lys-209 is subject to N6-acetyllysine; alternate. Lys-209 bears the N6-succinyllysine; alternate mark. Residues 218-279 (AREI…PRHI), Glu-270, and Asn-305 contribute to the ATP site. Ser-261 is subject to Phosphoserine. Lys-271 is modified (N6-succinyllysine). Lys-337 is modified (N6-acetyllysine; alternate). Lys-337 carries the N6-succinyllysine; alternate modification. Glu-345, Glu-358, and Asn-360 together coordinate Mg(2+). 3 residues coordinate Mn(2+): Glu-345, Glu-358, and Asn-360. Arg-362 is an active-site residue. Residues Lys-394 and Lys-416 each carry the N6-succinyllysine modification. Biotin is bound at residue Phe-418. N6-acetyllysine is present on Lys-505. N6-succinyllysine is present on residues Lys-511, Lys-522, Lys-567, and Lys-657. The Biotinyl-binding domain maps to 658-737 (FMLEKVPKDT…GEGDLLVELE (80 aa)). Lys-703 bears the N6-biotinyllysine; by HLCS mark.

As to quaternary structure, the holoenzyme is a dodecamer composed of 6 PCCA/alpha subunits and 6 PCCB/beta subunits. Interacts (via the biotin carboxylation domain) with SIRT4. Interacts with SIRT3 and SIRT5. Biotin is required as a cofactor. The cofactor is Mg(2+). Requires Mn(2+) as cofactor. Acetylated. Post-translationally, the biotin cofactor is covalently attached to the C-terminal biotinyl-binding domain and is required for the catalytic activity. Biotinylation is catalyzed by HLCS.

It is found in the mitochondrion matrix. The enzyme catalyses propanoyl-CoA + hydrogencarbonate + ATP = (S)-methylmalonyl-CoA + ADP + phosphate + H(+). It catalyses the reaction butanoyl-CoA + hydrogencarbonate + ATP = (2S)-ethylmalonyl-CoA + ADP + phosphate + H(+). The protein operates within metabolic intermediate metabolism; propanoyl-CoA degradation; succinyl-CoA from propanoyl-CoA: step 1/3. This is one of the 2 subunits of the biotin-dependent propionyl-CoA carboxylase (PCC), a mitochondrial enzyme involved in the catabolism of odd chain fatty acids, branched-chain amino acids isoleucine, threonine, methionine, and valine and other metabolites. Propionyl-CoA carboxylase catalyzes the carboxylation of propionyl-CoA/propanoyl-CoA to D-methylmalonyl-CoA/(S)-methylmalonyl-CoA. Within the holoenzyme, the alpha subunit catalyzes the ATP-dependent carboxylation of the biotin carried by the biotin carboxyl carrier (BCC) domain, while the beta subunit then transfers the carboxyl group from carboxylated biotin to propionyl-CoA. Propionyl-CoA carboxylase also significantly acts on butyryl-CoA/butanoyl-CoA, which is converted to ethylmalonyl-CoA/(2S)-ethylmalonyl-CoA. Other alternative minor substrates include (2E)-butenoyl-CoA/crotonoyl-CoA. The chain is Propionyl-CoA carboxylase alpha chain, mitochondrial from Rattus norvegicus (Rat).